The primary structure comprises 554 residues: Hydroxylamine reductase (554 aa).

The [2Fe-2S] cluster site is built by Cys3, Cys6, Cys18, and Cys25. The hybrid [4Fe-2O-2S] cluster site is built by His252, Glu276, Cys320, Cys408, Cys436, Cys461, Glu495, and Lys497. Cys408 bears the Cysteine persulfide mark.

It belongs to the HCP family. [2Fe-2S] cluster serves as cofactor. It depends on hybrid [4Fe-2O-2S] cluster as a cofactor.

It localises to the cytoplasm. It catalyses the reaction A + NH4(+) + H2O = hydroxylamine + AH2 + H(+). Its function is as follows. Catalyzes the reduction of hydroxylamine to form NH(3) and H(2)O. The protein is Hydroxylamine reductase of Shewanella baltica (strain OS223).